Reading from the N-terminus, the 384-residue chain is Putative glutamate--cysteine ligase 2 (384 aa).

The protein belongs to the glutamate--cysteine ligase type 2 family. YbdK subfamily.

The enzyme catalyses L-cysteine + L-glutamate + ATP = gamma-L-glutamyl-L-cysteine + ADP + phosphate + H(+). Its function is as follows. ATP-dependent carboxylate-amine ligase which exhibits weak glutamate--cysteine ligase activity. In Dechloromonas aromatica (strain RCB), this protein is Putative glutamate--cysteine ligase 2.